Consider the following 237-residue polypeptide: Aspartate/glutamate leucyltransferase (237 aa).

This sequence belongs to the R-transferase family. Bpt subfamily.

It is found in the cytoplasm. It catalyses the reaction N-terminal L-glutamyl-[protein] + L-leucyl-tRNA(Leu) = N-terminal L-leucyl-L-glutamyl-[protein] + tRNA(Leu) + H(+). The catalysed reaction is N-terminal L-aspartyl-[protein] + L-leucyl-tRNA(Leu) = N-terminal L-leucyl-L-aspartyl-[protein] + tRNA(Leu) + H(+). Functions in the N-end rule pathway of protein degradation where it conjugates Leu from its aminoacyl-tRNA to the N-termini of proteins containing an N-terminal aspartate or glutamate. In Shewanella amazonensis (strain ATCC BAA-1098 / SB2B), this protein is Aspartate/glutamate leucyltransferase.